A 129-amino-acid chain; its full sequence is Translation initiation factor 5A (129 aa).

K36 carries the post-translational modification Hypusine.

Belongs to the eIF-5A family.

The protein resides in the cytoplasm. Functionally, functions by promoting the formation of the first peptide bond. The protein is Translation initiation factor 5A (eIF5A) of Methanobrevibacter smithii (strain ATCC 35061 / DSM 861 / OCM 144 / PS).